Reading from the N-terminus, the 180-residue chain is uncharacterized protein (180 aa).

It belongs to the CdaR family.

This is an uncharacterized protein from Thermomonospora curvata.